The primary structure comprises 407 residues: GTPase Obg (407 aa).

Residues 1–159 (MKFVDEVSIR…RDLKLEMKVL (159 aa)) enclose the Obg domain. Positions 128 to 148 (TRFKSSTNRAPRQTTPGKPGE) are disordered. The span at 129-143 (RFKSSTNRAPRQTTP) shows a compositional bias: polar residues. Positions 160 to 333 (ADVGLLGLPN…LTRDIMRYLE (174 aa)) constitute an OBG-type G domain. Residues 166–173 (GLPNAGKS), 191–195 (FTTLV), 213–216 (DIPG), 283–286 (NKCD), and 314–316 (SAI) contribute to the GTP site. Mg(2+) is bound by residues Ser173 and Thr193. A disordered region spans residues 376–407 (SGVKSVHDIGDDDWDEEDVDDEDGPEIIYVRD). A compositionally biased stretch (acidic residues) spans 385–400 (GDDDWDEEDVDDEDGP).

It belongs to the TRAFAC class OBG-HflX-like GTPase superfamily. OBG GTPase family. As to quaternary structure, monomer. Mg(2+) is required as a cofactor.

Its subcellular location is the cytoplasm. Functionally, an essential GTPase which binds GTP, GDP and possibly (p)ppGpp with moderate affinity, with high nucleotide exchange rates and a fairly low GTP hydrolysis rate. Plays a role in control of the cell cycle, stress response, ribosome biogenesis and in those bacteria that undergo differentiation, in morphogenesis control. The chain is GTPase Obg from Pseudomonas fluorescens (strain Pf0-1).